Reading from the N-terminus, the 369-residue chain is Actin-related protein 2/3 complex subunit 1B-A (369 aa).

WD repeat units lie at residues 6–45, 50–89, 94–135, 140–179, 200–239, 242–282, and 321–364; these read FLLE…WSKI, EHNG…WKPT, RINR…WVCK, PIRS…VEER, SSCG…RVTS, TDTL…LSFG, and LHKN…SAMK.

The protein belongs to the WD repeat ARPC1 family. In terms of assembly, component of the Arp2/3 complex composed of actr2/arp2, actr3/arp3, arpc1 (arpc1a or arpc1b), arpc2, arpc3, arpc4 and arpc5.

The protein localises to the cytoplasm. It localises to the cytoskeleton. Its subcellular location is the nucleus. Its function is as follows. Component of the Arp2/3 complex, a multiprotein complex that mediates actin polymerization upon stimulation by nucleation-promoting factor (NPF). The Arp2/3 complex mediates the formation of branched actin networks in the cytoplasm, providing the force for cell motility. In addition to its role in the cytoplasmic cytoskeleton, the Arp2/3 complex also promotes actin polymerization in the nucleus, thereby regulating gene transcription and repair of damaged DNA. The Arp2/3 complex promotes homologous recombination (HR) repair in response to DNA damage by promoting nuclear actin polymerization, leading to drive motility of double-strand breaks (DSBs). The chain is Actin-related protein 2/3 complex subunit 1B-A (arpc1b-a) from Xenopus laevis (African clawed frog).